Here is a 357-residue protein sequence, read N- to C-terminus: Histidinol-phosphate aminotransferase (357 aa).

Lysine 218 is subject to N6-(pyridoxal phosphate)lysine.

This sequence belongs to the class-II pyridoxal-phosphate-dependent aminotransferase family. Histidinol-phosphate aminotransferase subfamily. Homodimer. It depends on pyridoxal 5'-phosphate as a cofactor.

The enzyme catalyses L-histidinol phosphate + 2-oxoglutarate = 3-(imidazol-4-yl)-2-oxopropyl phosphate + L-glutamate. Its pathway is amino-acid biosynthesis; L-histidine biosynthesis; L-histidine from 5-phospho-alpha-D-ribose 1-diphosphate: step 7/9. This chain is Histidinol-phosphate aminotransferase, found in Prosthecochloris aestuarii (strain DSM 271 / SK 413).